The sequence spans 551 residues: Prunin 1 Pru du 6 (551 aa).

A signal peptide spans 1–20 (MAKAFVFSLCLLLVFNGCLA). 2 disulfide bridges follow: Cys32–Cys65 and Cys108–Cys374. Residues 37–312 (LQAREPDNRI…ALNVNEETAR (276 aa)) enclose the Cupin type-1 1 domain. Disordered stretches follow at residues 111 to 194 (TFEE…QKTR), 238 to 293 (NPRK…NVFS), and 329 to 360 (GNLDFVQPPRGRQEREHEERQQEQLQQERQQQ). 3 stretches are compositionally biased toward low complexity: residues 114 to 124 (ESQQSSQQGRQ), 132 to 148 (QQQQQGEQGRQQGQQEQ), and 168 to 185 (QEQQQGQQGRPQQQQQFR). Arg194 contributes to the Ca(2+) binding site. Low complexity predominate over residues 254–275 (QQGQSQPRQQGEQGRPGQHQQP). The segment covering 282 to 293 (QEQQGNGNNVFS) has biased composition (polar residues). Residues 339-350 (GRQEREHEERQQ) are compositionally biased toward basic and acidic residues. Low complexity predominate over residues 351-360 (EQLQQERQQQ). The NGXEET; peptidase recognition motif motif lies at 367–372 (NGLEET). The 150-residue stretch at 380–529 (ENIGNPERAD…AYQISREQAR (150 aa)) folds into the Cupin type-1 2 domain.

The protein belongs to the 11S seed storage protein (globulins) family. Hexamer of two trimers; each subunit is composed of an acidic and a basic chain derived from a single precursor and linked by a disulfide bond. Post-translationally, proteolytically processed from a single precursor to produce an acidic and a basic chain that are linked by a disulfide bond. In terms of tissue distribution, expressed in seed (at protein level). Expressed in seed.

Its function is as follows. Seed storage protein. This chain is Prunin 1 Pru du 6, found in Prunus dulcis (Almond).